A 307-amino-acid chain; its full sequence is Pantothenate kinase (307 aa).

87–94 contributes to the ATP binding site; it reads GSVAVGKS.

It belongs to the prokaryotic pantothenate kinase family.

The protein localises to the cytoplasm. The enzyme catalyses (R)-pantothenate + ATP = (R)-4'-phosphopantothenate + ADP + H(+). The protein operates within cofactor biosynthesis; coenzyme A biosynthesis; CoA from (R)-pantothenate: step 1/5. This Vibrio vulnificus (strain CMCP6) protein is Pantothenate kinase.